Reading from the N-terminus, the 516-residue chain is D-aminopeptidase (516 aa).

Serine 61 serves as the catalytic Nucleophile. Residue lysine 64 is the Proton donor/acceptor of the active site. The interval 476-486 (RRSMDAPAPGD) is important for specificity. Position 480 (aspartate 480) interacts with substrate.

This sequence belongs to the peptidase S12 family. In terms of assembly, homodimer.

The enzyme catalyses Release of an N-terminal D-amino acid from a peptide, Xaa-|-Yaa-, in which Xaa is preferably D-Ala, D-Ser or D-Thr. D-amino acid amides and methyl esters also are hydrolyzed, as is glycine amide.. Its activity is regulated as follows. Inhibited by beta-lactam compounds such as 6-aminopenicillic acid, 7-aminocephalosporanic acid, benzylpenicillin and ampicillin. Inhibited by p-chloromercuribenzoate. Hydrolyzes N-terminal residues in D-amino acid-containing peptides. This is D-aminopeptidase from Cereibacter sphaeroides (strain ATCC 17029 / ATH 2.4.9) (Rhodobacter sphaeroides).